The following is a 170-amino-acid chain: Protein HemX (170 aa).

Residues 1–17 (MTEQKNTNENDLQNGTS) are compositionally biased toward polar residues. The disordered stretch occupies residues 1 to 24 (MTEQKNTNENDLQNGTSKADDDIR). A helical transmembrane segment spans residues 37–57 (GLIGSAVAILVILAIGGGLYY).

Its subcellular location is the cell membrane. This chain is Protein HemX, found in Proteus mirabilis.